The sequence spans 363 residues: Zinc phosphodiesterase ELAC protein 1 (363 aa).

The Zn(2+) site is built by His-62, His-64, Asp-66, His-67, His-182, Asp-253, and His-313. The active-site Proton acceptor is the Asp-66.

The protein belongs to the RNase Z family. In terms of assembly, homodimer. The cofactor is Zn(2+).

Its subcellular location is the cytoplasm. The protein localises to the cytosol. It localises to the nucleus. The catalysed reaction is Endonucleolytic cleavage of RNA, removing extra 3' nucleotides from tRNA precursor, generating 3' termini of tRNAs. A 3'-hydroxy group is left at the tRNA terminus and a 5'-phosphoryl group is left at the trailer molecule.. Its function is as follows. Zinc phosphodiesterase, which displays some tRNA 3'-processing endonuclease activity. Specifically involved in tRNA repair: acts downstream of the ribosome-associated quality control (RQC) pathway by removing a 2',3'-cyclic phosphate from tRNAs following cleavage by ANKZF1. tRNAs are then processed by TRNT1. This Bos taurus (Bovine) protein is Zinc phosphodiesterase ELAC protein 1 (ELAC1).